The sequence spans 1774 residues: Kinesin-like protein KIF20B (1774 aa).

Residues tyrosine 58 to valine 477 form the Kinesin motor domain. Residue glycine 152 to threonine 159 coordinates ATP. Phosphoserine is present on serine 486. Coiled coils occupy residues glutamate 525 to glutamate 601 and glutamine 705 to alanine 747. The segment covering glutamate 538–serine 555 has biased composition (acidic residues). Disordered stretches follow at residues glutamate 538–lysine 557 and glutamate 740–lysine 799. Positions serine 741 to glutamine 778 are enriched in polar residues. Positions threonine 779 to glutamate 788 are enriched in basic and acidic residues. Residues serine 824–arginine 946 adopt a coiled-coil conformation. Phosphoserine is present on serine 950. A necessary and sufficient for interaction with SHTN1 region spans residues glutamate 1002–serine 1059. A coiled-coil region spans residues lysine 1021–alanine 1507. A phosphoserine mark is found at serine 1107 and serine 1542. The tract at residues threonine 1514–lysine 1774 is interaction with PIN1. Residue threonine 1598 is modified to Phosphothreonine; by CDK1. The residue at position 1612 (serine 1612) is a Phosphoserine. Residues lysine 1625–serine 1663 are disordered. Over residues valine 1638–lysine 1651 the composition is skewed to basic and acidic residues. A phosphoserine mark is found at serine 1669 and serine 1694.

The protein belongs to the TRAFAC class myosin-kinesin ATPase superfamily. Kinesin family. In terms of assembly, oligomerizes (via kinesin motor domain). Associates with microtubules. Interacts (via C-terminal globular tail region) with PIN1 (via WW domain). Interacts with PRC1. Interacts with SHTN1 (via N-terminus); the interaction is direct and promotes the association of SHTN1 to microtubules in primary neurons. Associates with microtubules. Post-translationally, phosphorylated during mitosis by CDK1. Expressed in the brain (at protein level).

Its subcellular location is the nucleus. It is found in the cytoplasm. The protein resides in the cytoskeleton. The protein localises to the microtubule organizing center. It localises to the centrosome. Its subcellular location is the nucleolus. It is found in the nucleoplasm. The protein resides in the spindle. The protein localises to the spindle pole. It localises to the midbody. Its subcellular location is the cell projection. It is found in the axon. The protein resides in the growth cone. Plus-end-directed motor enzyme that is required for completion of cytokinesis. Required for proper midbody organization and abscission in polarized cortical stem cells. Plays a role in the regulation of neuronal polarization by mediating the transport of specific cargos. Participates in the mobilization of SHTN1 and in the accumulation of PIP3 in the growth cone of primary hippocampal neurons in a tubulin and actin-dependent manner. In the developing telencephalon, cooperates with SHTN1 to promote both the transition from the multipolar to the bipolar stage and the radial migration of cortical neurons from the ventricular zone toward the superficial layer of the neocortex. Involved in cerebral cortex growth. Acts as an oncogene for promoting bladder cancer cells proliferation, apoptosis inhibition and carcinogenic progression. The sequence is that of Kinesin-like protein KIF20B from Mus musculus (Mouse).